Here is a 166-residue protein sequence, read N- to C-terminus: Replication restart protein DnaT (166 aa).

The protein belongs to the DnaT family. In terms of assembly, homooligomerizes. Interacts with PriB. Component of the replication restart primosome. Primosome assembly occurs via a 'hand-off' mechanism. PriA binds to replication forks, subsequently PriB then DnaT bind; DnaT then displaces ssDNA to generate the helicase loading substrate.

Its function is as follows. Involved in the restart of stalled replication forks, which reloads the replicative helicase on sites other than the origin of replication. Can function in multiple replication restart pathways. Displaces ssDNA from a PriB-ssDNA complex. Probably forms a spiral filament on ssDNA. The sequence is that of Replication restart protein DnaT from Buchnera aphidicola subsp. Schizaphis graminum (strain Sg).